Reading from the N-terminus, the 821-residue chain is Bifunctional dethiobiotin synthetase/7,8-diamino-pelargonic acid aminotransferase, mitochondrial (821 aa).

The interval S28–D283 is dethiobiotin synthetase. G39 to L44 provides a ligand contact to ATP. Mg(2+) is bound at residue T43. T72 serves as a coordination point for substrate. E194 provides a ligand contact to Mg(2+). E194–G197 contacts ATP. The tract at residues R316 to L820 is 7,8-diamino-pelargonic acid aminotransferase. W374–W375 lines the (8S)-8-amino-7-oxononanoate pocket. G436–S437 serves as a coordination point for pyridoxal 5'-phosphate. Residue Y482 coordinates (8S)-8-amino-7-oxononanoate. A pyridoxal 5'-phosphate-binding site is contributed by D626. (8S)-8-amino-7-oxononanoate is bound by residues K655 and G689. An N6-(pyridoxal phosphate)lysine modification is found at K655. Residue S691 participates in pyridoxal 5'-phosphate binding. R787 contributes to the (8S)-8-amino-7-oxononanoate binding site.

In the N-terminal section; belongs to the dethiobiotin synthetase family. This sequence in the C-terminal section; belongs to the class-III pyridoxal-phosphate-dependent aminotransferase family. BioA subfamily. The cofactor is Mg(2+). Pyridoxal 5'-phosphate serves as cofactor.

The protein localises to the mitochondrion. The enzyme catalyses (7R,8S)-7,8-diammoniononanoate + CO2 + ATP = (4R,5S)-dethiobiotin + ADP + phosphate + 3 H(+). The catalysed reaction is (8S)-8-amino-7-oxononanoate + S-adenosyl-L-methionine = S-adenosyl-4-methylsulfanyl-2-oxobutanoate + (7R,8S)-7,8-diammoniononanoate. It functions in the pathway cofactor biosynthesis; biotin biosynthesis; biotin from 7,8-diaminononanoate: step 1/2. The protein operates within cofactor biosynthesis; biotin biosynthesis; 7,8-diaminononanoate from 8-amino-7-oxononanoate (SAM route): step 1/1. Functionally, bifunctional enzyme that catalyzes two different reactions involved in the biotin biosynthesis. Catalyzes a mechanistically unusual reaction, the ATP-dependent insertion of CO2 between the N7 and N8 nitrogen atoms of 7,8-diaminopelargonic acid (DAPA) to form an ureido ring. In terms of biological role, catalyzes the transfer of the alpha-amino group from S-adenosyl-L-methionine (SAM) to 7-keto-8-aminopelargonic acid (KAPA) to form 7,8-diaminopelargonic acid (DAPA). It is the only aminotransferase known to utilize SAM as an amino donor. In Oryza sativa subsp. japonica (Rice), this protein is Bifunctional dethiobiotin synthetase/7,8-diamino-pelargonic acid aminotransferase, mitochondrial (BIO3-BIO1).